A 208-amino-acid chain; its full sequence is WEB family protein At2g17940 (208 aa).

Positions 78 to 113 (RTLQLNTSLSNRIKTLTQELELGKKEIQRLSRTRSS) form a coiled coil.

Belongs to the WEB family.

This is WEB family protein At2g17940 from Arabidopsis thaliana (Mouse-ear cress).